A 118-amino-acid polypeptide reads, in one-letter code: Large ribosomal subunit protein bL19 (118 aa).

It belongs to the bacterial ribosomal protein bL19 family.

Its function is as follows. This protein is located at the 30S-50S ribosomal subunit interface and may play a role in the structure and function of the aminoacyl-tRNA binding site. The sequence is that of Large ribosomal subunit protein bL19 from Saccharophagus degradans (strain 2-40 / ATCC 43961 / DSM 17024).